A 538-amino-acid polypeptide reads, in one-letter code: CTP synthase (538 aa).

The amidoligase domain stretch occupies residues 1-267 (MDRAKFIFVT…LTPIARRFNL (267 aa)). Serine 15 contacts CTP. UTP is bound at residue serine 15. Residues 16 to 21 (SLGKGI) and aspartate 73 each bind ATP. Residues aspartate 73 and glutamate 141 each contribute to the Mg(2+) site. Residues 148-150 (DME), 188-193 (KTKPTQ), and lysine 224 contribute to the CTP site. Residues 188–193 (KTKPTQ) and lysine 224 each bind UTP. A Glutamine amidotransferase type-1 domain is found at 292 to 538 (KIGFVGKYLS…DFIKSALSKS (247 aa)). Glycine 351 contacts L-glutamine. Cysteine 378 functions as the Nucleophile; for glutamine hydrolysis in the catalytic mechanism. L-glutamine contacts are provided by residues 379 to 382 (LGMQ), glutamate 402, and arginine 469. Catalysis depends on residues histidine 513 and glutamate 515.

Belongs to the CTP synthase family. Homotetramer.

It catalyses the reaction UTP + L-glutamine + ATP + H2O = CTP + L-glutamate + ADP + phosphate + 2 H(+). The enzyme catalyses L-glutamine + H2O = L-glutamate + NH4(+). It carries out the reaction UTP + NH4(+) + ATP = CTP + ADP + phosphate + 2 H(+). Its pathway is pyrimidine metabolism; CTP biosynthesis via de novo pathway; CTP from UDP: step 2/2. Allosterically activated by GTP, when glutamine is the substrate; GTP has no effect on the reaction when ammonia is the substrate. The allosteric effector GTP functions by stabilizing the protein conformation that binds the tetrahedral intermediate(s) formed during glutamine hydrolysis. Inhibited by the product CTP, via allosteric rather than competitive inhibition. Catalyzes the ATP-dependent amination of UTP to CTP with either L-glutamine or ammonia as the source of nitrogen. Regulates intracellular CTP levels through interactions with the four ribonucleotide triphosphates. This Helicobacter pylori (strain ATCC 700392 / 26695) (Campylobacter pylori) protein is CTP synthase.